Here is a 692-residue protein sequence, read N- to C-terminus: Small conductance calcium-activated potassium channel-like protein 3 (692 aa).

Residues 270–290 (SLYLALFGVILMLVESEITAE) traverse the membrane as a helical segment. A helical membrane pass occupies residues 313 to 333 (TIALLYHIILYHLNDIVLELV). Residues 349 to 369 (VIQFCIEFICCGICPLPGSGE) traverse the membrane as a helical segment. The helical transmembrane segment at 401-421 (VILSCFMLCRSYLFARFMVLH) threads the bilayer. The helical transmembrane segment at 455–475 (PVLFLTTFTFIFWIIMSWMFV) threads the bilayer. The segment at residues 492–512 (YSNSLWFIAITFMLNGYGDIV) is an intramembrane region (pore-forming). Residues 520 to 540 (FIAIFVGVVGAVISSILIAVI) form a helical membrane-spanning segment. Polar residues predominate over residues 667–683 (HSTPNVPHLQGLTSSPV). Residues 667 to 692 (HSTPNVPHLQGLTSSPVPSDRYDNRF) are disordered.

The protein belongs to the potassium channel KCNN family. SK subfamily. Heterooligomer.

Its subcellular location is the membrane. Functionally, forms a voltage-independent potassium channel activated by intracellular calcium. The protein is Small conductance calcium-activated potassium channel-like protein 3 (kcnl-3) of Caenorhabditis elegans.